Here is an 84-residue protein sequence, read N- to C-terminus: Small ribosomal subunit protein uS17 (84 aa).

Belongs to the universal ribosomal protein uS17 family. In terms of assembly, part of the 30S ribosomal subunit.

Its function is as follows. One of the primary rRNA binding proteins, it binds specifically to the 5'-end of 16S ribosomal RNA. This is Small ribosomal subunit protein uS17 from Clostridium perfringens (strain SM101 / Type A).